A 515-amino-acid polypeptide reads, in one-letter code: MVADQAVLSSWRSVVGSLEDDARVSARLMGFVYLAQPQGLIGNTLLLAVPNETTRETLQGTQVADALTDALTQEFREEILLAISIDANLQPPRTPSSEARRSSLAGGPSGAAAPDVELPPAATAATSRRAVAEELPGFRIEPPADVVPAANAAPNGNGKPTPAPPSTSAETSRLNDRYHFETFVIGSSNRFAHAAANAVAEAPAKAYNPLFIYGESGLGKTHLLHAIGHYARRLYPGLRVRYVNSEEFTNDFINSIRHDEGASFKQVYRNVDILLIDDIQFLADKEATVEEFFHTFNTLYNNNKQVVITSDLPPKQLSGFEDRLRSRFEWGLITDIQPPDLETRIAILRKKAEAEGLVAPPEALEYIASRISTNIRELEGALIRVTAFASLNRQTVDIELAEHVLKDLITDETAHEITPELILHATGEYFNLTLEELTSKSRTRTLVTARQIAMYLLRELTEMSLPKIGQVLGGRDHTTVIHADRKIRELMAERRTIYNQVTELTNEIKRKQRGA.

The tract at residues 1 to 89 (MVADQAVLSS…LLAISIDANL (89 aa)) is domain I, interacts with DnaA modulators. The segment at 89-172 (LQPPRTPSSE…APPSTSAETS (84 aa)) is domain II. Disordered stretches follow at residues 90–130 (QPPR…SRRA) and 142–171 (PPAD…SAET). Composition is skewed to low complexity over residues 102–114 (SSLA…AAAP) and 143–160 (PADV…NGKP). A domain III, AAA+ region region spans residues 173 to 389 (RLNDRYHFET…GALIRVTAFA (217 aa)). Residues G217, G219, K220, and T221 each contribute to the ATP site. The domain IV, binds dsDNA stretch occupies residues 390 to 515 (SLNRQTVDIE…NEIKRKQRGA (126 aa)).

The protein belongs to the DnaA family. As to quaternary structure, oligomerizes as a right-handed, spiral filament on DNA at oriC.

The protein resides in the cytoplasm. In terms of biological role, plays an essential role in the initiation and regulation of chromosomal replication. ATP-DnaA binds to the origin of replication (oriC) to initiate formation of the DNA replication initiation complex once per cell cycle. Binds the DnaA box (a 9 base pair repeat at the origin) and separates the double-stranded (ds)DNA. Forms a right-handed helical filament on oriC DNA; dsDNA binds to the exterior of the filament while single-stranded (ss)DNA is stabiized in the filament's interior. The ATP-DnaA-oriC complex binds and stabilizes one strand of the AT-rich DNA unwinding element (DUE), permitting loading of DNA polymerase. After initiation quickly degrades to an ADP-DnaA complex that is not apt for DNA replication. Binds acidic phospholipids. This chain is Chromosomal replication initiator protein DnaA, found in Micrococcus luteus (strain ATCC 4698 / DSM 20030 / JCM 1464 / CCM 169 / CCUG 5858 / IAM 1056 / NBRC 3333 / NCIMB 9278 / NCTC 2665 / VKM Ac-2230) (Micrococcus lysodeikticus).